The following is a 464-amino-acid chain: Forkhead box protein N3 (464 aa).

Disordered regions lie at residues 1–53 (MGPI…EKGG) and 85–108 (PVQDIDDDTPPSPAQSDMPYDAKQ). Over residues 14–30 (TGISVSSQCYRSSTLSN) the composition is skewed to polar residues. Positions 113 to 209 (KPPYSFSCLI…QALKKTPYHP (97 aa)) form a DNA-binding region, fork-head. Disordered regions lie at residues 294 to 337 (MESE…SSSA) and 381 to 428 (LVES…MKEA). Low complexity predominate over residues 316-336 (SSAKSANKRSSSPSDSISSSS). The span at 389 to 401 (QHKKKQHLLKLRR) shows a compositional bias: basic residues.

Its subcellular location is the nucleus. Its function is as follows. Acts as a transcriptional repressor. May be involved in DNA damage-inducible cell cycle arrests (checkpoints). This chain is Forkhead box protein N3, found in Xenopus tropicalis (Western clawed frog).